Consider the following 958-residue polypeptide: Glycine dehydrogenase (decarboxylating) 2 (958 aa).

N6-(pyridoxal phosphate)lysine is present on Lys707.

Belongs to the GcvP family. As to quaternary structure, the glycine cleavage system is composed of four proteins: P, T, L and H. It depends on pyridoxal 5'-phosphate as a cofactor.

It carries out the reaction N(6)-[(R)-lipoyl]-L-lysyl-[glycine-cleavage complex H protein] + glycine + H(+) = N(6)-[(R)-S(8)-aminomethyldihydrolipoyl]-L-lysyl-[glycine-cleavage complex H protein] + CO2. Functionally, the glycine cleavage system catalyzes the degradation of glycine. The P protein binds the alpha-amino group of glycine through its pyridoxal phosphate cofactor; CO(2) is released and the remaining methylamine moiety is then transferred to the lipoamide cofactor of the H protein. The sequence is that of Glycine dehydrogenase (decarboxylating) 2 (gcvP2) from Pseudomonas aeruginosa (strain ATCC 15692 / DSM 22644 / CIP 104116 / JCM 14847 / LMG 12228 / 1C / PRS 101 / PAO1).